The following is a 520-amino-acid chain: 4-hydroxyphenylacetate 3-monooxygenase oxygenase component (520 aa).

This sequence belongs to the FADH(2)-utilizing monooxygenase family. As to quaternary structure, 4-HPA 3-monooxygenase consists of a reductase component HpaC and an oxygenase component HpaB.

The catalysed reaction is 4-hydroxyphenylacetate + FADH2 + O2 = 3,4-dihydroxyphenylacetate + FAD + H2O + H(+). It participates in aromatic compound metabolism; 4-hydroxyphenylacetate degradation; pyruvate and succinate semialdehyde from 4-hydroxyphenylacetate: step 1/7. Its function is as follows. Utilizes FADH(2) supplied by HpaC or by another flavin reductase, to catalyze the hydroxylation of 4-hydroxyphenylacetic acid, leading to the production of 3,4-DHPA. The sequence is that of 4-hydroxyphenylacetate 3-monooxygenase oxygenase component (hpaB) from Klebsiella oxytoca.